The sequence spans 282 residues: MSDVEENNFEGRESRSQSKSPTGTPARVKSESRSGSRSPSRVSKHSESHSRSRSKSRSRSRRHSHRRYTRSRSHSHSHRRRSRSRSYTPEYRRRRSRSHSPMSNRRRHTGSRANPDPNTCLGVFGLSLYTTERDLREVFSRYGPLSGVNVVYDQRTGRSRGFAFVYFERIDDSKEAMERANGMELDGRRIRVDYSITKRAHTPTPGIYMGRPTHSGGGGGGGGGGGGGGGGRRRDSYYDRGYDRGYDRYEDYDYRYRRRSPSPYYSRYRSRSRSRSYSPRRY.

The disordered stretch occupies residues 1–118; sequence MSDVEENNFE…TGSRANPDPN (118 aa). At S2 the chain carries N-acetylserine. S2 and S14 each carry phosphoserine. Residue T24 is modified to Phosphothreonine. The segment covering 51–84 has biased composition (basic residues); that stretch reads RSRSKSRSRSRRHSHRRYTRSRSHSHSHRRRSRS. A phosphoserine mark is found at S82, S84, and S86. T88 carries the phosphothreonine modification. Positions 92 to 110 are enriched in basic residues; it reads RRRRSRSHSPMSNRRRHTG. Phosphoserine occurs at positions 96 and 98. The RRM domain maps to 119–197; the sequence is TCLGVFGLSL…RRIRVDYSIT (79 aa). K198 participates in a covalent cross-link: Glycyl lysine isopeptide (Lys-Gly) (interchain with G-Cter in SUMO2). The tract at residues 198–225 is linker; it reads KRAHTPTPGIYMGRPTHSGGGGGGGGGG. 2 disordered regions span residues 201–245 and 260–282; these read HTPT…YDRG and SPSPYYSRYRSRSRSRSYSPRRY. Phosphothreonine occurs at positions 202 and 204. Residues 215–230 are compositionally biased toward gly residues; the sequence is SGGGGGGGGGGGGGGG. An Omega-N-methylarginine modification is found at R232. The segment covering 232–245 has biased composition (basic and acidic residues); it reads RRRDSYYDRGYDRG. Residue S236 is modified to Phosphoserine. The segment covering 268–282 has biased composition (basic residues); sequence YRSRSRSRSYSPRRY.

This sequence belongs to the splicing factor SR family. Binds to A3 enhancer proteins SRp75, SRp55, SRp40 and SRp30. Interacts with ILDR1 (via C-terminus) and ILDR2. In terms of processing, phosphorylated in the RS domains.

The protein localises to the nucleus. In terms of biological role, sequence-specific RNA-binding protein which participates in the control of pre-mRNA splicing. The protein is Transformer-2 protein homolog alpha of Homo sapiens (Human).